A 491-amino-acid polypeptide reads, in one-letter code: UDP-N-acetylmuramate--L-alanine ligase (491 aa).

115 to 121 lines the ATP pocket; the sequence is GTHGKTT.

Belongs to the MurCDEF family.

Its subcellular location is the cytoplasm. The catalysed reaction is UDP-N-acetyl-alpha-D-muramate + L-alanine + ATP = UDP-N-acetyl-alpha-D-muramoyl-L-alanine + ADP + phosphate + H(+). The protein operates within cell wall biogenesis; peptidoglycan biosynthesis. Cell wall formation. The sequence is that of UDP-N-acetylmuramate--L-alanine ligase from Parvibaculum lavamentivorans (strain DS-1 / DSM 13023 / NCIMB 13966).